We begin with the raw amino-acid sequence, 69 residues long: Disintegrin VLO5B (69 aa).

Positions 1–66 (MNSANPCCDP…DCPRNPWKSE (66 aa)) constitute a Disintegrin domain. 4 disulfides stabilise this stretch: C7–C30, C21–C27, C26–C51, and C39–C58. The Cell attachment site; atypical (MLD) signature appears at 43 to 45 (MLD).

It belongs to the disintegrin family. Dimeric disintegrin subfamily. In terms of assembly, heterodimer with VLO5A; disulfide-linked. As to expression, expressed by the venom gland.

It localises to the secreted. Its function is as follows. Poor inhibitor of platelet aggregation. The disintegrin inhibits the adhesion of the alpha-4/beta-1 (ITGA4/ITGB1) integrin to VCAM-1. Inhibition on alpha-2b/beta-3 (ITGA2B/ITGB3) is low. The polypeptide is Disintegrin VLO5B (Macrovipera lebetina obtusa (Levant blunt-nosed viper)).